The chain runs to 551 residues: Putative ABC transporter ATP-binding protein BA_3364/GBAA_3364/BAS3118 (551 aa).

ABC transporter domains are found at residues A5–F243 and L293–R525. Residues G39–T46 and G327–S334 contribute to the ATP site.

It belongs to the ABC transporter superfamily.

The protein resides in the cell membrane. Functionally, probably part of an ABC transporter complex. Responsible for energy coupling to the transport system. This Bacillus anthracis protein is Putative ABC transporter ATP-binding protein BA_3364/GBAA_3364/BAS3118.